Consider the following 690-residue polypeptide: Elongation factor G (690 aa).

The tr-type G domain maps to 8 to 283 (EDYRNFGIMA…AVVAYLPSPL (276 aa)). GTP contacts are provided by residues 17 to 24 (AHIDAGKT), 81 to 85 (DTPGH), and 135 to 138 (NKMD).

Belongs to the TRAFAC class translation factor GTPase superfamily. Classic translation factor GTPase family. EF-G/EF-2 subfamily.

It localises to the cytoplasm. Its function is as follows. Catalyzes the GTP-dependent ribosomal translocation step during translation elongation. During this step, the ribosome changes from the pre-translocational (PRE) to the post-translocational (POST) state as the newly formed A-site-bound peptidyl-tRNA and P-site-bound deacylated tRNA move to the P and E sites, respectively. Catalyzes the coordinated movement of the two tRNA molecules, the mRNA and conformational changes in the ribosome. The chain is Elongation factor G from Nitrobacter winogradskyi (strain ATCC 25391 / DSM 10237 / CIP 104748 / NCIMB 11846 / Nb-255).